A 247-amino-acid chain; its full sequence is Probable transcriptional regulatory protein PC1_1817 (247 aa).

This sequence belongs to the TACO1 family.

The protein resides in the cytoplasm. This chain is Probable transcriptional regulatory protein PC1_1817, found in Pectobacterium carotovorum subsp. carotovorum (strain PC1).